A 680-amino-acid polypeptide reads, in one-letter code: 1-deoxy-D-xylulose-5-phosphate synthase (680 aa).

Residues His-113 and 154 to 156 (GHS) contribute to the thiamine diphosphate site. Residue Asp-185 participates in Mg(2+) binding. Thiamine diphosphate-binding positions include 186-187 (GA), Asn-214, Phe-323, and Glu-408. Residue Asn-214 coordinates Mg(2+).

Belongs to the transketolase family. DXPS subfamily. In terms of assembly, homodimer. Requires Mg(2+) as cofactor. It depends on thiamine diphosphate as a cofactor.

The catalysed reaction is D-glyceraldehyde 3-phosphate + pyruvate + H(+) = 1-deoxy-D-xylulose 5-phosphate + CO2. It participates in metabolic intermediate biosynthesis; 1-deoxy-D-xylulose 5-phosphate biosynthesis; 1-deoxy-D-xylulose 5-phosphate from D-glyceraldehyde 3-phosphate and pyruvate: step 1/1. Its function is as follows. Catalyzes the acyloin condensation reaction between C atoms 2 and 3 of pyruvate and glyceraldehyde 3-phosphate to yield 1-deoxy-D-xylulose-5-phosphate (DXP). The polypeptide is 1-deoxy-D-xylulose-5-phosphate synthase (Psychrobacter arcticus (strain DSM 17307 / VKM B-2377 / 273-4)).